The following is a 302-amino-acid chain: Methionyl-tRNA formyltransferase (302 aa).

108 to 111 (SLLP) serves as a coordination point for (6S)-5,6,7,8-tetrahydrofolate.

Belongs to the Fmt family.

The catalysed reaction is L-methionyl-tRNA(fMet) + (6R)-10-formyltetrahydrofolate = N-formyl-L-methionyl-tRNA(fMet) + (6S)-5,6,7,8-tetrahydrofolate + H(+). In terms of biological role, attaches a formyl group to the free amino group of methionyl-tRNA(fMet). The formyl group appears to play a dual role in the initiator identity of N-formylmethionyl-tRNA by promoting its recognition by IF2 and preventing the misappropriation of this tRNA by the elongation apparatus. The polypeptide is Methionyl-tRNA formyltransferase (Nitratiruptor sp. (strain SB155-2)).